A 560-amino-acid polypeptide reads, in one-letter code: Nucleoprotein (560 aa).

The segment at 54–236 (LRKSKRGDTD…ITKDESALNI (183 aa)) is binding site for the cap structure m7GTP. Mn(2+) contacts are provided by aspartate 380 and glutamate 382. The Zn(2+) site is built by glutamate 390, cysteine 497, histidine 500, and cysteine 521. Residue aspartate 525 participates in Mn(2+) binding.

This sequence belongs to the arenaviridae nucleocapsid protein family. As to quaternary structure, homomultimerizes to form the nucleocapsid. Binds to viral genomic RNA. Interacts with glycoprotein G2. Interacts with protein Z; this interaction probably directs the encapsidated genome to budding sites. Interacts with protein L; this interaction does not interfere with Z-L interaction. Interacts with host IKBKE (via Protein kinase domain); the interaction inhibits IKBKE kinase activity.

It localises to the virion. Its subcellular location is the host cytoplasm. Functionally, encapsidates the genome, protecting it from nucleases. The encapsidated genomic RNA is termed the nucleocapsid (NC). Serves as template for viral transcription and replication. The increased presence of protein N in host cell does not seem to trigger the switch from transcription to replication as observed in other negative strain RNA viruses. Through the interaction with host IKBKE, strongly inhibits the phosphorylation and nuclear translocation of host IRF3, a protein involved in interferon activation pathway, leading to the inhibition of interferon-beta and IRF3-dependent promoters activation. Also encodes a functional 3'-5' exoribonuclease that degrades preferentially dsRNA substrates and thereby participates in the suppression of interferon induction. This chain is Nucleoprotein, found in Homo sapiens (Human).